A 919-amino-acid chain; its full sequence is MGSKNKIAKCPIRTKQTGYILKSTQNTCIRSGKLLQKKRMGSETSLAKGEKSSMIFSPTKDLCKQYVDKDCLYVQKEISPATPTIQKTRNTINTSVVAKQKHCKKHITAENTKSGLVCLTQDQLQQILMTVNQGNKSISAIENGKEETSQDSLHLNNTSNQPKDENIMGFQKNEALSSVLDENKSTLNKNQETSKQYEQKIAIENVWKPADIFSTLGERERDRSLLEAKKAQWKKELDEQVALKKKEKEASEKWNNPWKKFESDKIVWEKFQTLGQSKTSLSSSNILSQSPSQITVVQADDYPLCRASQILEETVPLERPLSTVKQEQQRKWIEDLNKQIEDDRQRKIEEKITSSKGEEHDRWAMHFDSLKNYPASQSQLSSRSIHNQPEYFCVSPDTQELSDISNVYTPTTGSQVEPSEEEHIAKPVRDMAMANSQKTNFLRSMTALLDPAQIEERDRRRQKQLEHQKAITAQVEEKRRKKQLEEQQRKKEEQEEERRLAREREEMQKQYEEDILKQKQKEEIMTLKTNELFQTMQRAQELAQRLKQEQRIRELAQKGHDTSGLIKNLGGYGLDDVSGKMNTCINSTTSPKKDTAVQTDDLNTGMFTIAESCCGSIIEREILNCSSPEIPAEFNDQFKKDKQELINQDKAANLEKENSWYNDQYEFARTEKKHMKKCPKRPDWNINKPLKRYIPASEKYPKQLQKQREEKKVRRQMELLNLVERNNPGHLSQNRGTSPVLPSPQEAEARFRWHLIRKEEPLKSDSFSKKKKNRSQSPLELVKNRTQQTQTLKNRENLILGDSQTETSPGASEPSHFIPYVRTNEIYHLDPDAPLSRPLTQDLQYQNPHDCDQEQWQLFESDVRDPLLNPNLVKNRDRQQAILKGLSELRQGLLQKQRELETNLMPLAANQEENFNSSF.

Disordered regions lie at residues 145–166 (KEET…KDEN), 456–505 (ERDR…RERE), 724–744 (ERNN…LPSP), and 762–816 (LKSD…EPSH). Positions 150–161 (QDSLHLNNTSNQ) are enriched in polar residues. Residues 467-558 (HQKAITAQVE…EQRIRELAQK (92 aa)) are a coiled coil. Residues 570–919 (GGYGLDDVSG…NQEENFNSSF (350 aa)) are mediates localization to cilia, centrosomes and spindle microtubules and the interaction with PCM1, CEP290, CEP104 and CSPP1.

Homodimer; disulfide-linked. Interacts with CEP290. Interacts with PCM1. Interacts with ARMC9, TOGARAM1, CSPP1 and CEP104. Interacts with CDK5RAP2, CEP152, CEP192, TBG1 and PRC1. Expressed in retina and blood. Expressed in retina, mainly in photoreceptors but also in outer plexiform and ganglion cell layers (at protein level).

The protein resides in the cytoplasm. The protein localises to the cytoskeleton. It localises to the microtubule organizing center. It is found in the centrosome. Its subcellular location is the centriolar satellite. The protein resides in the cell projection. The protein localises to the cilium. It localises to the cilium basal body. It is found in the cilium axoneme. Its subcellular location is the photoreceptor inner segment. The protein resides in the photoreceptor outer segment. Functionally, microtubule-binding protein required for ciliogenesis. May function in ciliogenesis by mediating the transport of proteins like BBS4 to the cilium, but also through the organization of the centriolar satellites. Required for the assembly of signaling-competent cilia with proper structure and length. Mediates this function in part by regulating transition zone assembly and basal body recruitment of the IFT-B complex. Cooperates with the ciliopathy proteins CSPP1 and CEP104 during cilium length regulation. Plays two important roles during cell division. First, is required for mitotic progression via regulation of spindle assembly, organization and orientation, levels of spindle microtubules (MTs), kinetochore-fiber integrity, and chromosome alignment. Second, functions during cytokinesis in part by regulating assembly and organization of central spindle and midbody MTs. Plays a role in retina morphogenesis and/or homeostasis. This chain is Coiled-coil domain-containing protein 66 (CCDC66), found in Canis lupus familiaris (Dog).